The chain runs to 271 residues: Probable esterase D14L (271 aa).

Residue S96 is the Nucleophile of the active site. Catalysis depends on residues D218 and H247.

Belongs to the AB hydrolase superfamily. As to quaternary structure, component of an intracellular receptor complex involved in the detection of the smoke compound karrikin. As to expression, expressed constitutively in all organs (e.g. roots, stems, leaves, panicles and embryos).

The protein localises to the nucleus. It localises to the cytoplasm. Functionally, may be involved in strigolactone signaling pathway. Essential for plant responses to karrikins, a class of butenolide compounds, structurally similar to strigolactones, released from burning vegetation that stimulate seed germination and enhance seedling photomorphogenesis. Mediates a specific perception of karrikin. Required for the establishment of symbiosis with the arbuscular mycorrhizal fungi (AMF) Rhizophagus irregularis and Gigaspora rosea. Karrikin binding induces a conformational change. The polypeptide is Probable esterase D14L (D14L) (Oryza sativa subsp. japonica (Rice)).